The following is an 881-amino-acid chain: Probable inorganic carbon transporter subunit DabA (881 aa).

Zn(2+) contacts are provided by Cys-399, Asp-401, His-585, and Cys-600.

This sequence belongs to the inorganic carbon transporter (TC 9.A.2) DabA family. As to quaternary structure, forms a complex with DabB. Zn(2+) serves as cofactor.

Its subcellular location is the cell membrane. Functionally, part of an energy-coupled inorganic carbon pump. The protein is Probable inorganic carbon transporter subunit DabA of Geobacillus sp. (strain WCH70).